The chain runs to 199 residues: Protein P1 (199 aa).

The protein is Protein P1 of Rice tungro bacilliform virus (isolate Philippines) (RTBV).